The sequence spans 460 residues: 7-cyano-7-deazaguanine synthase 2 (460 aa).

Cys2 acts as the For GATase activity in catalysis. The Glutamine amidotransferase type-2 domain occupies 2 to 225 (CSVTGVLIIK…PYSIVEVNDN (224 aa)). 245 to 255 (ASGGLDSTVAA) is a binding site for ATP. Zn(2+) is bound by residues Cys426, Cys434, Cys437, and Cys440.

Belongs to the QueC family. Zn(2+) serves as cofactor.

It carries out the reaction 7-carboxy-7-deazaguanine + NH4(+) + ATP = 7-cyano-7-deazaguanine + ADP + phosphate + H2O + H(+). It functions in the pathway purine metabolism; 7-cyano-7-deazaguanine biosynthesis. Catalyzes the ATP-dependent conversion of 7-carboxy-7-deazaguanine (CDG) to 7-cyano-7-deazaguanine (preQ(0)). This is 7-cyano-7-deazaguanine synthase 2 (queC2) from Sulfurisphaera tokodaii (strain DSM 16993 / JCM 10545 / NBRC 100140 / 7) (Sulfolobus tokodaii).